A 142-amino-acid polypeptide reads, in one-letter code: Large ribosomal subunit protein uL29 (142 aa).

This sequence belongs to the universal ribosomal protein uL29 family.

The chain is Large ribosomal subunit protein uL29 (RPL35) from Theileria annulata.